Here is a 164-residue protein sequence, read N- to C-terminus: Peptidyl-prolyl cis-trans isomerase A-like 4G (164 aa).

The PPIase cyclophilin-type domain occupies 7 to 163 (FFDITVDGKP…KKITIADCGQ (157 aa)).

Belongs to the cyclophilin-type PPIase family. PPIase A subfamily.

The protein localises to the cytoplasm. It catalyses the reaction [protein]-peptidylproline (omega=180) = [protein]-peptidylproline (omega=0). In terms of biological role, PPIases accelerate the folding of proteins. It catalyzes the cis-trans isomerization of proline imidic peptide bonds in oligopeptides. This chain is Peptidyl-prolyl cis-trans isomerase A-like 4G (PPIAL4G), found in Homo sapiens (Human).